The sequence spans 158 residues: Glutamyl-tRNA(Gln) amidotransferase subunit C, mitochondrial (158 aa).

The protein belongs to the GatC family. As to quaternary structure, subunit of the heterotrimeric GatCAB amidotransferase (AdT) complex, composed of A, B and C subunits.

The protein resides in the mitochondrion. It carries out the reaction L-glutamyl-tRNA(Gln) + L-glutamine + ATP + H2O = L-glutaminyl-tRNA(Gln) + L-glutamate + ADP + phosphate + H(+). Its function is as follows. Allows the formation of correctly charged Gln-tRNA(Gln) through the transamidation of misacylated Glu-tRNA(Gln) in the mitochondria. The reaction takes place in the presence of glutamine and ATP through an activated gamma-phospho-Glu-tRNA(Gln). This is Glutamyl-tRNA(Gln) amidotransferase subunit C, mitochondrial from Drosophila grimshawi (Hawaiian fruit fly).